The primary structure comprises 503 residues: ATP synthase subunit alpha (503 aa).

170-177 serves as a coordination point for ATP; that stretch reads GDKQTGKT.

This sequence belongs to the ATPase alpha/beta chains family. As to quaternary structure, F-type ATPases have 2 components, CF(1) - the catalytic core - and CF(0) - the membrane proton channel. CF(1) has five subunits: alpha(3), beta(3), gamma(1), delta(1), epsilon(1). CF(0) has three main subunits: a(1), b(2) and c(9-12). The alpha and beta chains form an alternating ring which encloses part of the gamma chain. CF(1) is attached to CF(0) by a central stalk formed by the gamma and epsilon chains, while a peripheral stalk is formed by the delta and b chains.

The protein localises to the cell inner membrane. It carries out the reaction ATP + H2O + 4 H(+)(in) = ADP + phosphate + 5 H(+)(out). Produces ATP from ADP in the presence of a proton gradient across the membrane. The alpha chain is a regulatory subunit. In Helicobacter acinonychis (strain Sheeba), this protein is ATP synthase subunit alpha.